A 399-amino-acid chain; its full sequence is MARAKFERTKDHVNIGTIGHVDHGKTTLTAAITMTLAELGGAKARKYEDIDAAPEEKARGITINTAHVEYETDSRHYAHVDCPGHADYVKNMITGAAQMDGAILVVSAADGPMPQTREHILLAKQVGVPKLVVFLNKKDMVDDEELLELVELEVRELLSDYDFPGDDIPIVAGSALKAIEGEKEYKDAILELMKAVDDYIDTPEREVDKPFLMAVEDVFSITGRGTVATGRIERGKVKVGEEISIVGIKDTRKATVTGVEMFQKTLEEGMAGDNVGLLLRGIQKEDIERGMVLAKPGSITPHTEFEGEVYVLKKEEGGRHTPFFANYRPQFYVRTTDVTGTIKSYTADDGSAVEMVMPGDRIKMTVELINPIAIEQGMRFAIREGGRTIGAGVVSKILK.

Positions 10 to 204 constitute a tr-type G domain; it reads KDHVNIGTIG…AVDDYIDTPE (195 aa). Residues 19-26 are G1; it reads GHVDHGKT. 19 to 26 lines the GTP pocket; that stretch reads GHVDHGKT. Threonine 26 serves as a coordination point for Mg(2+). The tract at residues 60–64 is G2; it reads GITIN. A G3 region spans residues 81 to 84; that stretch reads DCPG. GTP is bound by residues 81–85 and 136–139; these read DCPGH and NKKD. Residues 136 to 139 are G4; it reads NKKD. The interval 174–176 is G5; that stretch reads SAL.

This sequence belongs to the TRAFAC class translation factor GTPase superfamily. Classic translation factor GTPase family. EF-Tu/EF-1A subfamily. In terms of assembly, monomer.

The protein resides in the cytoplasm. It carries out the reaction GTP + H2O = GDP + phosphate + H(+). GTP hydrolase that promotes the GTP-dependent binding of aminoacyl-tRNA to the A-site of ribosomes during protein biosynthesis. The protein is Elongation factor Tu of Synechocystis sp. (strain ATCC 27184 / PCC 6803 / Kazusa).